Reading from the N-terminus, the 150-residue chain is UPF0260 protein VIBHAR_03078 (150 aa).

Belongs to the UPF0260 family.

The polypeptide is UPF0260 protein VIBHAR_03078 (Vibrio campbellii (strain ATCC BAA-1116)).